Consider the following 151-residue polypeptide: MYPAHLLVLLAVCVSLLGAASIPARPLNLYQFGNMIQCANHGRRPTWHYMDYGCYCGKGGSGTPVDELDRCCQIHDDCYGEAEKLPACNYMMSGPYYNTYSYECNEGELTCKDNNDECKAFICNCDRTAAICFARTPYNDANWNIDTKTRC.

An N-terminal signal peptide occupies residues 1-27 (MYPAHLLVLLAVCVSLLGAASIPARPL). 7 cysteine pairs are disulfide-bonded: C38–C104, C54–C151, C56–C72, C71–C132, C78–C125, C88–C118, and C111–C123. The Ca(2+) site is built by Y55, G57, and G59. H75 is an active-site residue. Residue D76 coordinates Ca(2+). The active site involves D126.

It belongs to the phospholipase A2 family. Group I subfamily. D49 sub-subfamily. The cofactor is Ca(2+). Expressed by the venom gland.

It is found in the secreted. It carries out the reaction a 1,2-diacyl-sn-glycero-3-phosphocholine + H2O = a 1-acyl-sn-glycero-3-phosphocholine + a fatty acid + H(+). PLA2 catalyzes the calcium-dependent hydrolysis of the 2-acyl groups in 3-sn-phosphoglycerides. The chain is Acidic phospholipase A2 6 from Tropidechis carinatus (Australian rough-scaled snake).